A 492-amino-acid chain; its full sequence is Aspartyl/glutamyl-tRNA(Asn/Gln) amidotransferase subunit B (492 aa).

It belongs to the GatB/GatE family. GatB subfamily. In terms of assembly, heterotrimer of A, B and C subunits.

It catalyses the reaction L-glutamyl-tRNA(Gln) + L-glutamine + ATP + H2O = L-glutaminyl-tRNA(Gln) + L-glutamate + ADP + phosphate + H(+). The catalysed reaction is L-aspartyl-tRNA(Asn) + L-glutamine + ATP + H2O = L-asparaginyl-tRNA(Asn) + L-glutamate + ADP + phosphate + 2 H(+). Allows the formation of correctly charged Asn-tRNA(Asn) or Gln-tRNA(Gln) through the transamidation of misacylated Asp-tRNA(Asn) or Glu-tRNA(Gln) in organisms which lack either or both of asparaginyl-tRNA or glutaminyl-tRNA synthetases. The reaction takes place in the presence of glutamine and ATP through an activated phospho-Asp-tRNA(Asn) or phospho-Glu-tRNA(Gln). The sequence is that of Aspartyl/glutamyl-tRNA(Asn/Gln) amidotransferase subunit B from Dehalococcoides mccartyi (strain ATCC BAA-2266 / KCTC 15142 / 195) (Dehalococcoides ethenogenes (strain 195)).